Reading from the N-terminus, the 149-residue chain is MSTSSCSFKDRRVSILCCKFCKQVLSSRGMKAVLLADTEIDLFSTDIPPTNAVDFIGRCYFTEICKCKLKDIACLKCGNIVGYHVIVPCCSCLLSCNNGHFWMFHSQAVYGINRLDSTGVNFLLWGNLPEVEENTDEDMLDISAEECIR.

The protein belongs to the FAM72 family. In terms of assembly, interacts with UNG. In terms of tissue distribution, expressed at high levels in stomach and also in kidney and, at low levels, in heart (at protein level). In the stomach, highly expressed in foveolar cells, parietal cells and chief cells (at protein level). In kidney, expressed in endothelial cells, mesangial and epithelial cells (parietal and visceral epithelium) around glomerulus (at protein level).

Its subcellular location is the cytoplasm. It is found in the mitochondrion. May play a role in the regulation of cellular reactive oxygen species metabolism. May participate in cell growth regulation. The sequence is that of Protein FAM72A (FAM72A) from Bos taurus (Bovine).